The sequence spans 313 residues: HPr kinase/phosphorylase (313 aa).

Catalysis depends on residues H141 and K162. Residue 156–163 (GKSGIGKS) participates in ATP binding. S163 provides a ligand contact to Mg(2+). The active-site Proton acceptor; for phosphorylation activity. Proton donor; for dephosphorylation activity is D180. The segment at 203–212 (IEIRGIGIFD) is important for the catalytic mechanism of both phosphorylation and dephosphorylation. Mg(2+) is bound at residue E204. R247 is a catalytic residue. The segment at 268 to 273 (PVSAGR) is important for the catalytic mechanism of dephosphorylation.

It belongs to the HPrK/P family. In terms of assembly, homohexamer. The cofactor is Mg(2+).

The enzyme catalyses [HPr protein]-L-serine + ATP = [HPr protein]-O-phospho-L-serine + ADP + H(+). It catalyses the reaction [HPr protein]-O-phospho-L-serine + phosphate + H(+) = [HPr protein]-L-serine + diphosphate. Catalyzes the ATP- as well as the pyrophosphate-dependent phosphorylation of a specific serine residue in HPr, a phosphocarrier protein of the phosphoenolpyruvate-dependent sugar phosphotransferase system (PTS). HprK/P also catalyzes the pyrophosphate-producing, inorganic phosphate-dependent dephosphorylation (phosphorolysis) of seryl-phosphorylated HPr (P-Ser-HPr). The two antagonistic activities of HprK/P are regulated by several intracellular metabolites, which change their concentration in response to the absence or presence of rapidly metabolisable carbon sources (glucose, fructose, etc.) in the growth medium. Therefore, by controlling the phosphorylation state of HPr, HPrK/P is a sensor enzyme that plays a major role in the regulation of carbon metabolism and sugar transport: it mediates carbon catabolite repression (CCR), and regulates PTS-catalyzed carbohydrate uptake and inducer exclusion. This is HPr kinase/phosphorylase from Mycoplasma mycoides subsp. mycoides SC (strain CCUG 32753 / NCTC 10114 / PG1).